The following is a 354-amino-acid chain: RH-like protein (354 aa).

The next 8 membrane-spanning stretches (helical) occupy residues 11-31 (GCLP…FFFF), 45-65 (VATY…LGFL), 77-97 (VAFN…LDGF), 125-145 (ISVG…MVLV), 167-187 (VNIM…AWCL), 209-229 (AMLG…ALLT), 238-258 (VFNT…VSSL), and 287-307 (LISS…ISIG).

This sequence belongs to the ammonium transporter (TC 2.A.49) family. Rh subfamily.

The protein resides in the membrane. Functionally, may be part of an oligomeric complex which is likely to have a transport or channel function in the erythrocyte membrane. This chain is RH-like protein, found in Hylobates pileatus (Pileated gibbon).